A 246-amino-acid polypeptide reads, in one-letter code: Probable transcriptional regulatory protein GK2594 (246 aa).

This sequence belongs to the TACO1 family.

The protein resides in the cytoplasm. This chain is Probable transcriptional regulatory protein GK2594, found in Geobacillus kaustophilus (strain HTA426).